A 738-amino-acid chain; its full sequence is Integrin beta-2-like protein (738 aa).

Residues 1–22 (MLGQCTLLPVLAGLLSLESALS) form the signal peptide. The Extracellular segment spans residues 23 to 671 (QLCTKDNVST…LVCAEISNTT (649 aa)). In terms of domain architecture, PSI spans 24 to 74 (LCTKDNVSTCQDCIRSGPSCAWCQKLNFTGRGEPDSVRCDTPEQLLLKGCT). Disulfide bonds link Cys-25-Cys-419, Cys-33-Cys-43, Cys-36-Cys-73, Cys-46-Cys-62, Cys-218-Cys-258, Cys-358-Cys-372, Cys-421-Cys-439, Cys-431-Cys-442, Cys-444-Cys-453, Cys-455-Cys-486, Cys-469-Cys-484, Cys-478-Cys-489, Cys-491-Cys-506, Cys-508-Cys-531, Cys-513-Cys-529, Cys-521-Cys-534, Cys-536-Cys-545, Cys-547-Cys-570, Cys-554-Cys-568, Cys-562-Cys-573, Cys-575-Cys-584, Cys-594-Cys-603, and Cys-600-Cys-664. Asn-29 carries N-linked (GlcNAc...) asparagine glycosylation. N-linked (GlcNAc...) asparagine glycans are attached at residues Asn-50, Asn-102, Asn-173, Asn-226, Asn-252, Asn-342, Asn-360, and Asn-386. Residues 126–329 (SVDLYFLMGL…DSSNVAQLIR (204 aa)) form the VWFA domain. I-EGF domains are found at residues 421 to 454 (CQEQ…KNCE), 455 to 507 (CQTQ…QYCE), 508 to 546 (CNNV…SACQ), and 547 to 585 (CRMS…PLCE). Asn-473 carries an N-linked (GlcNAc...) asparagine glycan. N-linked (GlcNAc...) asparagine glycans are attached at residues Asn-627 and Asn-669. Residues 672–692 (ILLGVIVGVLLAVIFLLVYCM) traverse the membrane as a helical segment. Over 693 to 738 (VYLKGTQKAAKLPRKGGAQSTLAQQPHFQEPHHVEPVWNQERQGTQ) the chain is Cytoplasmic. Positions 709-738 (GAQSTLAQQPHFQEPHHVEPVWNQERQGTQ) are disordered. Over residues 710–719 (AQSTLAQQPH) the composition is skewed to polar residues.

Belongs to the integrin beta chain family. Monomer and homodimer. Unlike integrin beta chains, no alpha chain partner has yet been found. In terms of processing, N-glycosylated. Expressed predominantly in maturing and mature neutrophils.

The protein resides in the cell membrane. Its function is as follows. During inflammatory stimulation, plays a role in retaining Cxcl13-expressing cells at the site of the inflammatory response. The polypeptide is Integrin beta-2-like protein (Mus musculus (Mouse)).